Reading from the N-terminus, the 102-residue chain is RNA-binding protein Hfq (102 aa).

The Sm domain maps to 9–68 (DPFLNALRRERVPVSIYLVNGIKLQGQIESFDQFVILLKNTVSQMVYKHAISTVVPSRPV). Residues 65-102 (SRPVSHHSSNTSVGASVGNYHSGGVSAPAAQQESDGTE) are disordered. Over residues 93 to 102 (AAQQESDGTE) the composition is skewed to polar residues.

This sequence belongs to the Hfq family. As to quaternary structure, homohexamer.

Functionally, RNA chaperone that binds small regulatory RNA (sRNAs) and mRNAs to facilitate mRNA translational regulation in response to envelope stress, environmental stress and changes in metabolite concentrations. Also binds with high specificity to tRNAs. The protein is RNA-binding protein Hfq of Photorhabdus laumondii subsp. laumondii (strain DSM 15139 / CIP 105565 / TT01) (Photorhabdus luminescens subsp. laumondii).